A 245-amino-acid polypeptide reads, in one-letter code: Large ribosomal subunit protein uL2 (245 aa).

Residues 198–245 are disordered; it reads VSHPHGGGSHKRPGKPTTVARTAPPGQKVGHIAARKTGRAKRRAATKR. Over residues 230–245 the composition is skewed to basic residues; it reads AARKTGRAKRRAATKR.

This sequence belongs to the universal ribosomal protein uL2 family. As to quaternary structure, part of the 50S ribosomal subunit. Forms a bridge to the 30S subunit in the 70S ribosome.

Functionally, one of the primary rRNA binding proteins. Required for association of the 30S and 50S subunits to form the 70S ribosome, for tRNA binding and peptide bond formation. It has been suggested to have peptidyltransferase activity; this is somewhat controversial. Makes several contacts with the 16S rRNA in the 70S ribosome. This is Large ribosomal subunit protein uL2 from Korarchaeum cryptofilum (strain OPF8).